The primary structure comprises 312 residues: Phosphatidate cytidylyltransferase (312 aa).

The disordered stretch occupies residues 1 to 31 (MASTDPGTGTPLDESVPGIKRAMRQSTKNTP). 8 helical membrane passes run 37–57 (LPAA…TLVF), 58–78 (APRI…HEVV), 85–105 (GYVI…WLTW), 110–130 (VGAL…RLVM), 157–177 (ATVF…LLVY), 186–206 (FCLM…GVLF), 223–243 (GFAG…TFLA), and 247–267 (PWVG…GDLV).

This sequence belongs to the CDS family.

It localises to the cell membrane. The enzyme catalyses a 1,2-diacyl-sn-glycero-3-phosphate + CTP + H(+) = a CDP-1,2-diacyl-sn-glycerol + diphosphate. It participates in phospholipid metabolism; CDP-diacylglycerol biosynthesis; CDP-diacylglycerol from sn-glycerol 3-phosphate: step 3/3. The protein is Phosphatidate cytidylyltransferase (cdsA) of Mycobacterium leprae (strain TN).